The sequence spans 99 residues: DNA-binding protein HU (99 aa).

Residues 67 to 86 are disordered; it reads REGRNPKTGAKMKIDAYNQP.

This sequence belongs to the bacterial histone-like protein family. As to quaternary structure, homodimer.

In terms of biological role, histone-like DNA-binding protein which is capable of wrapping DNA to stabilize it, and thus to prevent its denaturation under extreme environmental conditions. This Rickettsia felis (strain ATCC VR-1525 / URRWXCal2) (Rickettsia azadi) protein is DNA-binding protein HU (hup).